A 756-amino-acid polypeptide reads, in one-letter code: Ribonucleoside-diphosphate reductase subunit alpha (756 aa).

One can recognise an ATP-cone domain in the interval 5–95 (LMVTKRDGTQ…IFHLRKKAYG (91 aa)). ATP-binding positions include lysine 9, 15–21 (EQINLDK), threonine 55, and lysine 91. Threonine 209 contacts GDP. Cysteine 225 and cysteine 462 are joined by a disulfide. DTTP contacts are provided by residues 232–234 (DSL), arginine 262, and arginine 269. Asparagine 437 lines the GDP pocket. The Proton acceptor role is filled by asparagine 437. Residue cysteine 439 is the Cysteine radical intermediate of the active site. Residues glutamate 441 and 623-625 (ETS) each bind GDP. Glutamate 441 (proton acceptor) is an active-site residue.

Belongs to the ribonucleoside diphosphate reductase large chain family. Tetramer of two alpha and two beta subunits.

It catalyses the reaction a 2'-deoxyribonucleoside 5'-diphosphate + [thioredoxin]-disulfide + H2O = a ribonucleoside 5'-diphosphate + [thioredoxin]-dithiol. With respect to regulation, under complex allosteric control mediated by deoxynucleoside triphosphates and ATP binding to separate specificity and activation sites on the alpha subunit. The type of nucleotide bound at the specificity site determines substrate preference. It seems probable that ATP makes the enzyme reduce CDP and UDP, dGTP favors ADP reduction and dTTP favors GDP reduction. Stimulated by ATP and inhibited by dATP binding to the activity site. In terms of biological role, provides the precursors necessary for DNA synthesis. Catalyzes the biosynthesis of deoxyribonucleotides from the corresponding ribonucleotides. In Haemophilus influenzae (strain ATCC 51907 / DSM 11121 / KW20 / Rd), this protein is Ribonucleoside-diphosphate reductase subunit alpha (nrdA).